Consider the following 37-residue polypeptide: Esculentin-2JDa (37 aa).

A disulfide bridge connects residues cysteine 31 and cysteine 37.

In terms of tissue distribution, expressed by the skin glands.

The protein resides in the secreted. Has antibacterial activity against E.coli and S.aureus strains. This chain is Esculentin-2JDa, found in Odorrana jingdongensis (Jingdong frog).